Consider the following 251-residue polypeptide: MRTPIIAGNWKLHMNPEQTVEFVNAVKGKLPDPSKVESVIAAPAVDLYVLKKAAEGSDLHTGAENAYFEVEGAFTGETSPKVLNEMGIDYCIIGHSERRGYFHETDEDINKKAKALFANGVTPIICCGESLETREANKQEDWVVAQIKAALDGLTAEQVSKLVIAYEPIWAIGTGKTASADQAEEMCKTIRETVKDLYNEETAENVRIQYGGSVKPANVKELMSKPDIDGGLVGGASLDPESFLALVNYQD.

A substrate-binding site is contributed by 9–11; sequence NWK. The active-site Electrophile is His95. Residue Glu167 is the Proton acceptor of the active site. Substrate is bound by residues Gly173, Ser213, and 234–235; that span reads GG.

Belongs to the triosephosphate isomerase family. As to quaternary structure, homodimer.

The protein localises to the cytoplasm. It carries out the reaction D-glyceraldehyde 3-phosphate = dihydroxyacetone phosphate. It participates in carbohydrate biosynthesis; gluconeogenesis. It functions in the pathway carbohydrate degradation; glycolysis; D-glyceraldehyde 3-phosphate from glycerone phosphate: step 1/1. Its function is as follows. Involved in the gluconeogenesis. Catalyzes stereospecifically the conversion of dihydroxyacetone phosphate (DHAP) to D-glyceraldehyde-3-phosphate (G3P). The chain is Triosephosphate isomerase from Lactobacillus gasseri (strain ATCC 33323 / DSM 20243 / BCRC 14619 / CIP 102991 / JCM 1131 / KCTC 3163 / NCIMB 11718 / NCTC 13722 / AM63).